We begin with the raw amino-acid sequence, 729 residues long: Fatty acid oxidation complex subunit alpha (729 aa).

The segment at 1-189 (MLYKGDTLYL…KIGLVDGVVK (189 aa)) is enoyl-CoA hydratase/isomerase. Substrate is bound at residue aspartate 296. Residues 311-729 (ETPKQAAVLG…ARPVGDLKTA (419 aa)) form a 3-hydroxyacyl-CoA dehydrogenase region. NAD(+) is bound by residues methionine 324, aspartate 343, 400–402 (VVE), lysine 407, and serine 429. Histidine 450 acts as the For 3-hydroxyacyl-CoA dehydrogenase activity in catalysis. Residue asparagine 453 coordinates NAD(+). Substrate is bound by residues asparagine 500 and tyrosine 660. The disordered stretch occupies residues 708 to 729 (RHNEPYYPPVEPARPVGDLKTA).

It in the N-terminal section; belongs to the enoyl-CoA hydratase/isomerase family. This sequence in the C-terminal section; belongs to the 3-hydroxyacyl-CoA dehydrogenase family. Heterotetramer of two alpha chains (FadB) and two beta chains (FadA).

The catalysed reaction is a (3S)-3-hydroxyacyl-CoA + NAD(+) = a 3-oxoacyl-CoA + NADH + H(+). The enzyme catalyses a (3S)-3-hydroxyacyl-CoA = a (2E)-enoyl-CoA + H2O. It carries out the reaction a 4-saturated-(3S)-3-hydroxyacyl-CoA = a (3E)-enoyl-CoA + H2O. It catalyses the reaction (3S)-3-hydroxybutanoyl-CoA = (3R)-3-hydroxybutanoyl-CoA. The catalysed reaction is a (3Z)-enoyl-CoA = a 4-saturated (2E)-enoyl-CoA. The enzyme catalyses a (3E)-enoyl-CoA = a 4-saturated (2E)-enoyl-CoA. Its pathway is lipid metabolism; fatty acid beta-oxidation. Involved in the aerobic and anaerobic degradation of long-chain fatty acids via beta-oxidation cycle. Catalyzes the formation of 3-oxoacyl-CoA from enoyl-CoA via L-3-hydroxyacyl-CoA. It can also use D-3-hydroxyacyl-CoA and cis-3-enoyl-CoA as substrate. In Escherichia coli O17:K52:H18 (strain UMN026 / ExPEC), this protein is Fatty acid oxidation complex subunit alpha.